The following is a 367-amino-acid chain: Alcohol dehydrogenase 2 (367 aa).

Cys-48, His-74, Cys-107, Cys-110, Cys-113, Cys-121, and Cys-163 together coordinate Zn(2+). NAD(+) contacts are provided by residues 187–193 (GAGGGLG), Asp-212, Lys-216, 286–288 (VGI), and Arg-361.

This sequence belongs to the zinc-containing alcohol dehydrogenase family. Homotetramer. It depends on Zn(2+) as a cofactor.

Its subcellular location is the cytoplasm. It catalyses the reaction a primary alcohol + NAD(+) = an aldehyde + NADH + H(+). It carries out the reaction a secondary alcohol + NAD(+) = a ketone + NADH + H(+). The protein is Alcohol dehydrogenase 2 (alcB) of Emericella nidulans (strain FGSC A4 / ATCC 38163 / CBS 112.46 / NRRL 194 / M139) (Aspergillus nidulans).